The sequence spans 85 residues: MKFCVAVSLLIIASMAGVISVSGYDVYPRDYAENYYYCGVRKDPDCSKICKLHGARVGYCHVKRCSCVDLPEKNQNFLSVIWKHC.

Residues 1-23 (MKFCVAVSLLIIASMAGVISVSG) form the signal peptide. Residues 24-85 (YDVYPRDYAE…NFLSVIWKHC (62 aa)) form the LCN-type CS-alpha/beta domain. Cystine bridges form between cysteine 38/cysteine 60, cysteine 46/cysteine 65, and cysteine 50/cysteine 67.

This sequence belongs to the long (3 C-C) scorpion toxin superfamily. In terms of tissue distribution, expressed by the venom gland.

It is found in the secreted. The chain is Neurtoxin 10 from Lychas mucronatus (Chinese swimming scorpion).